A 275-amino-acid chain; its full sequence is NH(3)-dependent NAD(+) synthetase (275 aa).

50-57 (GISGGVDS) contributes to the ATP binding site. Aspartate 56 lines the Mg(2+) pocket. Residue arginine 147 coordinates deamido-NAD(+). Residue threonine 167 coordinates ATP. Mg(2+) is bound at residue glutamate 172. Deamido-NAD(+)-binding residues include lysine 180 and aspartate 187. Lysine 196 and threonine 218 together coordinate ATP. 267 to 268 (HK) contacts deamido-NAD(+).

The protein belongs to the NAD synthetase family. Homodimer.

The catalysed reaction is deamido-NAD(+) + NH4(+) + ATP = AMP + diphosphate + NAD(+) + H(+). It functions in the pathway cofactor biosynthesis; NAD(+) biosynthesis; NAD(+) from deamido-NAD(+) (ammonia route): step 1/1. In terms of biological role, catalyzes the ATP-dependent amidation of deamido-NAD to form NAD. Uses ammonia as a nitrogen source. The protein is NH(3)-dependent NAD(+) synthetase of Pseudomonas putida (strain GB-1).